Consider the following 378-residue polypeptide: uncharacterized protein (378 aa).

The span at 1-11 (MSPMNRQRKNK) shows a compositional bias: basic residues. Residues 1–23 (MSPMNRQRKNKSNVLNEKDERPG) form a disordered region.

This is an uncharacterized protein from Caenorhabditis elegans.